The sequence spans 198 residues: Angiopoietin-like protein 8 (198 aa).

The first 15 residues, methionine 1 to alanine 15, serve as a signal peptide directing secretion.

It belongs to the ANGPTL8 family. Interacts with ANGPTL3. Proteolytically cleaved at the N-terminus. As to expression, expressed in liver and fat. Enriched in white and brown adipose tissues.

The protein localises to the secreted. Hormone that acts as a blood lipid regulator by regulating serum triglyceride levels. May be involved in the metabolic transition between fasting and refeeding: required to direct fatty acids to adipose tissue for storage in the fed state. According to a report, may act by promoting ANGPTL3 cleavage. According to another study, not required for cleavage of ANGPTL3. The polypeptide is Angiopoietin-like protein 8 (Mus musculus (Mouse)).